A 300-amino-acid chain; its full sequence is Acetylglutamate kinase (300 aa).

Substrate is bound by residues 73–74 (GG), arginine 95, and asparagine 197.

Belongs to the acetylglutamate kinase family. ArgB subfamily.

The protein resides in the cytoplasm. It carries out the reaction N-acetyl-L-glutamate + ATP = N-acetyl-L-glutamyl 5-phosphate + ADP. It functions in the pathway amino-acid biosynthesis; L-arginine biosynthesis; N(2)-acetyl-L-ornithine from L-glutamate: step 2/4. In terms of biological role, catalyzes the ATP-dependent phosphorylation of N-acetyl-L-glutamate. This is Acetylglutamate kinase from Polynucleobacter necessarius subsp. necessarius (strain STIR1).